The following is a 293-amino-acid chain: Notch homolog 2 N-terminal-like protein C (293 aa).

EGF-like domains follow at residues 42 to 81, 82 to 120, 123 to 161, and 162 to 198; these read PPRMCRDGYEPCVNEGMCVTYHNGTGYCKCPEGFLGEYCQ, HRDPCEKNRCQNGGTCVAQAMLGKATCRCASGFTGEDCQ, TSHPCFVSRPCLNGGTCHMLSRDTYECTCQVGFTGKECQ, and WTDACLSHPCANGSTCTTVANQFSCKCLTGFTGQKCE. Cystine bridges form between C46-C59, C53-C69, C71-C80, C86-C97, C91-C108, C110-C119, C127-C139, C133-C149, C151-C160, C166-C177, C171-C186, C188-C197, C204-C216, C210-C225, C227-C236, C243-C254, and C248-C264. N-linked (GlcNAc...) asparagine glycosylation occurs at N64. A glycan (N-linked (GlcNAc...) asparagine) is linked at N173. The EGF-like 5; calcium-binding domain maps to 200–237; sequence DVNECDIPGHCQHGGTCLNLPGSYQCQCLQGFTGQYCD. The EGF-like 6 domain occupies 239 to 276; that stretch reads LYVPCAPSPCVNGGTCRQTGDFTFECNCLPETVRRGTE.

This sequence belongs to the NOTCH family. As to quaternary structure, interacts with NOTCH2. Interacts with DLL1; the interaction is direct. Expressed in radial glia neural stem cells during cortical development.

The protein localises to the secreted. In terms of biological role, human-specific protein that promotes neural progenitor proliferation and evolutionary expansion of the brain neocortex by regulating the Notch signaling pathway. Able to promote neural progenitor self-renewal, possibly by down-regulating neuronal differentiation genes, thereby delaying the differentiation of neuronal progenitors and leading to an overall final increase in neuronal production. Acts by enhancing the Notch signaling pathway via two different mechanisms that probably work in parallel to reach the same effect. Enhances Notch signaling pathway in a non-cell-autonomous manner via direct interaction with NOTCH2. Also promotes Notch signaling pathway in a cell-autonomous manner through inhibition of cis DLL1-NOTCH2 interactions, which promotes neuronal differentiation. This is Notch homolog 2 N-terminal-like protein C from Homo sapiens (Human).